A 426-amino-acid chain; its full sequence is Enolase (426 aa).

Residue Gln163 coordinates (2R)-2-phosphoglycerate. Catalysis depends on Glu205, which acts as the Proton donor. Positions 242, 286, and 313 each coordinate Mg(2+). 4 residues coordinate (2R)-2-phosphoglycerate: Lys338, Arg367, Ser368, and Lys389. Catalysis depends on Lys338, which acts as the Proton acceptor.

This sequence belongs to the enolase family. Mg(2+) serves as cofactor.

It is found in the cytoplasm. Its subcellular location is the secreted. The protein localises to the cell surface. The catalysed reaction is (2R)-2-phosphoglycerate = phosphoenolpyruvate + H2O. Its pathway is carbohydrate degradation; glycolysis; pyruvate from D-glyceraldehyde 3-phosphate: step 4/5. Catalyzes the reversible conversion of 2-phosphoglycerate (2-PG) into phosphoenolpyruvate (PEP). It is essential for the degradation of carbohydrates via glycolysis. This Gemmatimonas aurantiaca (strain DSM 14586 / JCM 11422 / NBRC 100505 / T-27) protein is Enolase.